The following is a 227-amino-acid chain: Protein lin-28 (227 aa).

Polar residues predominate over residues 1 to 17 (MSTVVSEGRNDGNNRYS). The interval 1-27 (MSTVVSEGRNDGNNRYSPQDEVEDRLP) is disordered. The CSD domain maps to 52–120 (RYFGSCKWFN…GREAYAVSGE (69 aa)). 2 CCHC-type zinc fingers span residues 143–160 (RCFRCGKFATHKAKSCPN) and 166–183 (KVCYTCGSEEHVSSICPE). The Zn(2+) site is built by Cys-144, Cys-147, His-153, Cys-158, Cys-168, Cys-171, His-176, and Cys-181. The disordered stretch occupies residues 181 to 227 (CPERRRKHRPEQVAAEEAEAARMAAEKSSPTTSDDDIREKNSNSSDE).

It belongs to the lin-28 family. Component of a complex at least containing lep-2, lin-28 and the long non-coding RNA lep-5, which mediates the degradation of lin-28. Post-translationally, cleavage by caspase ced-3 during larval development probably induces lin-28 degradation.

Its subcellular location is the cytoplasm. Functionally, heterochronic protein which controls the choice of stage specific cell fates. Regulates the timing of the second larval stage events (L2 events) in the hypodermis. May negatively regulate the larval to adult transition via the suppression of the microRNA (miRNA) let-7 during L3. Through this regulatory role, controls the timing of the sexual maturation of the nervous system. Also has a role in the fox-1-sex-1-mediated determination of sexual fate. Plays a role in governing the developmental timing of male tail tip morphogenesis. Plays a role in controlling the seam cell number during larval stages. Plays a role in vulval development. The sequence is that of Protein lin-28 from Caenorhabditis elegans.